The following is a 270-amino-acid chain: uncharacterized protein (270 aa).

Histidine 171 acts as the Proton donor in catalysis. Cysteine 261 functions as the Nucleophile in the catalytic mechanism.

Belongs to the DDAH family.

This is an uncharacterized protein from Aeropyrum pernix (strain ATCC 700893 / DSM 11879 / JCM 9820 / NBRC 100138 / K1).